The chain runs to 182 residues: Biotin carboxyl carrier protein of acetyl-CoA carboxylase (182 aa).

Residues 70-95 form a disordered region; that stretch reads AAPSPSPEPGTSRAADHAVTSSGSQP. A Biotinyl-binding domain is found at 104 to 180; sequence LAEVASPMVG…EYNQPLMRIK (77 aa). An N6-biotinyllysine modification is found at Lys146.

As to quaternary structure, homodimer.

Its pathway is lipid metabolism; fatty acid biosynthesis. In terms of biological role, this protein is a component of the acetyl coenzyme A carboxylase complex; first, biotin carboxylase catalyzes the carboxylation of the carrier protein and then the transcarboxylase transfers the carboxyl group to form malonyl-CoA. The protein is Biotin carboxyl carrier protein of acetyl-CoA carboxylase (accB) of Nostoc sp. (strain PCC 7120 / SAG 25.82 / UTEX 2576).